Reading from the N-terminus, the 183-residue chain is Adenine phosphoribosyltransferase (183 aa).

This sequence belongs to the purine/pyrimidine phosphoribosyltransferase family. In terms of assembly, homodimer.

Its subcellular location is the cytoplasm. It carries out the reaction AMP + diphosphate = 5-phospho-alpha-D-ribose 1-diphosphate + adenine. Its pathway is purine metabolism; AMP biosynthesis via salvage pathway; AMP from adenine: step 1/1. Its function is as follows. Catalyzes a salvage reaction resulting in the formation of AMP, that is energically less costly than de novo synthesis. The chain is Adenine phosphoribosyltransferase from Salmonella paratyphi C (strain RKS4594).